The sequence spans 525 residues: GMP synthase [glutamine-hydrolyzing] (525 aa).

Residues 9–207 (RILILDFGSQ…VRDICQCEAL (199 aa)) enclose the Glutamine amidotransferase type-1 domain. Cys-86 (nucleophile) is an active-site residue. Active-site residues include His-181 and Glu-183. In terms of domain architecture, GMPS ATP-PPase spans 208–400 (WTPAKIIDDA…LGLPYDMLYR (193 aa)). Residue 235–241 (SGGVDSS) participates in ATP binding.

In terms of assembly, homodimer.

It carries out the reaction XMP + L-glutamine + ATP + H2O = GMP + L-glutamate + AMP + diphosphate + 2 H(+). It functions in the pathway purine metabolism; GMP biosynthesis; GMP from XMP (L-Gln route): step 1/1. Functionally, catalyzes the synthesis of GMP from XMP. The polypeptide is GMP synthase [glutamine-hydrolyzing] (Salmonella schwarzengrund (strain CVM19633)).